The chain runs to 353 residues: Colistin resistance protein EmrA (353 aa).

The chain crosses the membrane as a helical span at residues 21–41 (WGVFSVLLLFLVAGILYYFFV). The stretch at 132–204 (VVAAQADLAR…QASRAQLLAD (73 aa)) forms a coiled coil.

It belongs to the membrane fusion protein (MFP) (TC 8.A.1) family.

It is found in the cell inner membrane. Probably part of an efflux pump system that contributes to adaptation to osmotic stress and resistance to colistin. The chain is Colistin resistance protein EmrA from Acinetobacter baumannii (strain ATCC 17978 / DSM 105126 / CIP 53.77 / LMG 1025 / NCDC KC755 / 5377).